Reading from the N-terminus, the 373-residue chain is tRNA (guanine(26)-N(2))-dimethyltransferase (373 aa).

One can recognise a Trm1 methyltransferase domain in the interval 2 to 365; that stretch reads KIISEGETKL…AELSDLVVLI (364 aa). The S-adenosyl-L-methionine site is built by Arg35, Arg66, Asp86, Asp113, and Ala114.

The protein belongs to the class I-like SAM-binding methyltransferase superfamily. Trm1 family.

The enzyme catalyses guanosine(26) in tRNA + 2 S-adenosyl-L-methionine = N(2)-dimethylguanosine(26) in tRNA + 2 S-adenosyl-L-homocysteine + 2 H(+). Its function is as follows. Dimethylates a single guanine residue at position 26 of a number of tRNAs using S-adenosyl-L-methionine as donor of the methyl groups. This Methanococcus maripaludis (Methanococcus deltae) protein is tRNA (guanine(26)-N(2))-dimethyltransferase.